The primary structure comprises 363 residues: Zinc phosphodiesterase ELAC protein 1 (363 aa).

His62, His64, Asp66, His67, His182, Asp253, and His313 together coordinate Zn(2+). Asp66 acts as the Proton acceptor in catalysis.

This sequence belongs to the RNase Z family. In terms of assembly, homodimer. Zn(2+) serves as cofactor. Widely expressed. Expressed in heart, brain, placenta, lung, liver, skeletal muscle, kidney and pancreas.

It localises to the cytoplasm. It is found in the cytosol. The protein localises to the nucleus. It catalyses the reaction Endonucleolytic cleavage of RNA, removing extra 3' nucleotides from tRNA precursor, generating 3' termini of tRNAs. A 3'-hydroxy group is left at the tRNA terminus and a 5'-phosphoryl group is left at the trailer molecule.. Its function is as follows. Zinc phosphodiesterase, which displays some tRNA 3'-processing endonuclease activity. Specifically involved in tRNA repair: acts downstream of the ribosome-associated quality control (RQC) pathway by removing a 2',3'-cyclic phosphate from tRNAs following cleavage by ANKZF1. tRNAs are then processed by TRNT1. This chain is Zinc phosphodiesterase ELAC protein 1, found in Homo sapiens (Human).